An 865-amino-acid polypeptide reads, in one-letter code: TATA box-binding protein-associated factor RNA polymerase I subunit B (865 aa).

An RRN7-type zinc finger spans residues 1-33; the sequence is MHSAKNEKCNACGGYRFSVNDGFKYCDRCGALF. Cys9, Cys12, Cys26, and Cys29 together coordinate Zn(2+). The tract at residues 35–99 is B-reader; it reads NFEELEEEEG…DFLQQQAIKG (65 aa). Positions 100 to 111 are B-linker; the sequence is EELELPHDATPD. The interval 112–348 is N-terminal cyclin fold; sequence YLYRLALRLF…SQPERMKQGE (237 aa). A disordered region spans residues 233-261; that stretch reads DEDGDQDAQGGQQLDDLTLETTQNPDESI. Low complexity predominate over residues 239–248; sequence DAQGGQQLDD. Over residues 252–261 the composition is skewed to polar residues; the sequence is ETTQNPDESI. The interval 349 to 496 is C-terminal cyclin fold; that stretch reads VVKPTIVDYA…LLTLRLTFQL (148 aa).

This sequence belongs to the RRN7/TAF1B family.

The protein localises to the nucleus. It is found in the nucleolus. Component of RNA polymerase I core factor complex that acts as a GTF2B/TFIIB-like factor and plays a key role in multiple steps during transcription initiation such as pre-initiation complex (PIC) assembly and postpolymerase recruitment events in polymerase I (Pol I) transcription. Binds rDNA promoters and plays a role in Pol I recruitment. This Caenorhabditis elegans protein is TATA box-binding protein-associated factor RNA polymerase I subunit B.